The chain runs to 213 residues: Thiamine-phosphate synthase (213 aa).

4-amino-2-methyl-5-(diphosphooxymethyl)pyrimidine-binding positions include 39–43 and Asn71; that span reads QLREK. The Mg(2+) site is built by Asp72 and Asp91. Ser110 serves as a coordination point for 4-amino-2-methyl-5-(diphosphooxymethyl)pyrimidine. Residue 136 to 138 participates in 2-[(2R,5Z)-2-carboxy-4-methylthiazol-5(2H)-ylidene]ethyl phosphate binding; it reads TGT. Lys139 contributes to the 4-amino-2-methyl-5-(diphosphooxymethyl)pyrimidine binding site. 2-[(2R,5Z)-2-carboxy-4-methylthiazol-5(2H)-ylidene]ethyl phosphate-binding positions include Gly166 and 186-187; that span reads VS.

This sequence belongs to the thiamine-phosphate synthase family. The cofactor is Mg(2+).

It catalyses the reaction 2-[(2R,5Z)-2-carboxy-4-methylthiazol-5(2H)-ylidene]ethyl phosphate + 4-amino-2-methyl-5-(diphosphooxymethyl)pyrimidine + 2 H(+) = thiamine phosphate + CO2 + diphosphate. It carries out the reaction 2-(2-carboxy-4-methylthiazol-5-yl)ethyl phosphate + 4-amino-2-methyl-5-(diphosphooxymethyl)pyrimidine + 2 H(+) = thiamine phosphate + CO2 + diphosphate. The enzyme catalyses 4-methyl-5-(2-phosphooxyethyl)-thiazole + 4-amino-2-methyl-5-(diphosphooxymethyl)pyrimidine + H(+) = thiamine phosphate + diphosphate. It functions in the pathway cofactor biosynthesis; thiamine diphosphate biosynthesis; thiamine phosphate from 4-amino-2-methyl-5-diphosphomethylpyrimidine and 4-methyl-5-(2-phosphoethyl)-thiazole: step 1/1. Functionally, condenses 4-methyl-5-(beta-hydroxyethyl)thiazole monophosphate (THZ-P) and 2-methyl-4-amino-5-hydroxymethyl pyrimidine pyrophosphate (HMP-PP) to form thiamine monophosphate (TMP). The chain is Thiamine-phosphate synthase from Clostridium botulinum (strain Eklund 17B / Type B).